The sequence spans 329 residues: Sorting assembly machinery 35 kDa subunit (329 aa).

Component of the mitochondrial outer membrane sorting assembly machinery (SAM or TOB) complex, which at least consists of SAM35, SAM37 and SAM50.

The protein localises to the mitochondrion outer membrane. Essential component of the mitochondrial outer membrane sorting assembly machinery (SAM or TOB) complex, which is required for the sorting of proteins with complicated topology, such as beta-barrel proteins, to the mitochondrial outer membrane after import by the TOM complex. This is Sorting assembly machinery 35 kDa subunit (SAM35) from Saccharomyces cerevisiae (strain ATCC 204508 / S288c) (Baker's yeast).